We begin with the raw amino-acid sequence, 248 residues long: Glutathione S-transferase omega-2 (248 aa).

A GST N-terminal domain is found at 22–101; it reads GVIRIYSMRF…YLDDVYPGRK (80 aa). C32 acts as the Nucleophile in catalysis. Residues K59, I72, and 85–86 contribute to the glutathione site; that span reads ES. The GST C-terminal domain occupies 106-231; the sequence is DPYERARQKM…VFLGFLNLYF (126 aa).

The protein belongs to the GST superfamily. Omega family.

It catalyses the reaction RX + glutathione = an S-substituted glutathione + a halide anion + H(+). The enzyme catalyses L-dehydroascorbate + 2 glutathione = glutathione disulfide + L-ascorbate. It carries out the reaction methylarsonate + 2 glutathione + H(+) = methylarsonous acid + glutathione disulfide + H2O. Its function is as follows. Exhibits glutathione-dependent thiol transferase activity. Has high dehydroascorbate reductase activity and may contribute to the recycling of ascorbic acid. Participates in the biotransformation of inorganic arsenic and reduces monomethylarsonic acid (MMA). The protein is Glutathione S-transferase omega-2 (Gsto2) of Mus musculus (Mouse).